Here is a 397-residue protein sequence, read N- to C-terminus: Mitochondrial inner membrane magnesium transporter LPE10 (397 aa).

The N-terminal 37 residues, 1–37, are a transit peptide targeting the mitochondrion; the sequence is MLLVNRAITLNLVKRCCWRSTMFMTPKRFLGTSEEES. The chain crosses the membrane as a helical span at residues 316-336; it reads LMLLGIRFSIGMLSLGGPIFI. The short motif at 340–343 is the YGMN element; sequence YGMN. The helical transmembrane segment at 354–374 threads the bilayer; sequence GFIAASAIGMISLGALYFYSI.

Belongs to the CorA metal ion transporter (MIT) (TC 1.A.35) family. As to quaternary structure, forms homooligomers. Interacts with MRS2.

It is found in the mitochondrion inner membrane. Mitochondrial inner membrane magnesium transporter required for mitochondrial magnesium homeostasis. Modulates the conductance of the MRS2 channel. Involved in the splicing of mRNA group II introns in mitochondria by affecting mitochondrial magnesium concentrations, which are critical for group II intron splicing. This chain is Mitochondrial inner membrane magnesium transporter LPE10 (LPE10), found in Candida glabrata (strain ATCC 2001 / BCRC 20586 / JCM 3761 / NBRC 0622 / NRRL Y-65 / CBS 138) (Yeast).